The following is a 381-amino-acid chain: Alkanesulfonate monooxygenase (381 aa).

The protein belongs to the SsuD family. As to quaternary structure, homotetramer.

The enzyme catalyses an alkanesulfonate + FMNH2 + O2 = an aldehyde + FMN + sulfite + H2O + 2 H(+). Catalyzes the desulfonation of aliphatic sulfonates. The protein is Alkanesulfonate monooxygenase of Shigella flexneri.